The following is a 294-amino-acid chain: Pantothenate synthetase 3 (294 aa).

An ATP-binding site is contributed by 31 to 38; that stretch reads MGALHEGH. The Proton donor role is filled by histidine 38. Residue glutamine 62 participates in (R)-pantoate binding. Glutamine 62 serves as a coordination point for beta-alanine. 154 to 157 is an ATP binding site; it reads GEKD. Glutamine 160 lines the (R)-pantoate pocket. 191–194 provides a ligand contact to ATP; the sequence is LSSR.

This sequence belongs to the pantothenate synthetase family. Homodimer.

It localises to the cytoplasm. It carries out the reaction (R)-pantoate + beta-alanine + ATP = (R)-pantothenate + AMP + diphosphate + H(+). It participates in cofactor biosynthesis; (R)-pantothenate biosynthesis; (R)-pantothenate from (R)-pantoate and beta-alanine: step 1/1. Its function is as follows. Catalyzes the condensation of pantoate with beta-alanine in an ATP-dependent reaction via a pantoyl-adenylate intermediate. This Frankia alni (strain DSM 45986 / CECT 9034 / ACN14a) protein is Pantothenate synthetase 3.